Reading from the N-terminus, the 296-residue chain is Homoserine kinase (296 aa).

92–102 (PQSRGLGSSAA) contacts ATP.

The protein belongs to the GHMP kinase family. Homoserine kinase subfamily.

Its subcellular location is the cytoplasm. The enzyme catalyses L-homoserine + ATP = O-phospho-L-homoserine + ADP + H(+). The protein operates within amino-acid biosynthesis; L-threonine biosynthesis; L-threonine from L-aspartate: step 4/5. Its function is as follows. Catalyzes the ATP-dependent phosphorylation of L-homoserine to L-homoserine phosphate. The polypeptide is Homoserine kinase (Cutibacterium acnes (strain DSM 16379 / KPA171202) (Propionibacterium acnes)).